A 111-amino-acid polypeptide reads, in one-letter code: Prothymosin alpha-A (111 aa).

Residues 1 to 111 (MSDTAVDASV…IKKQKTDEDD (111 aa)) form a disordered region. A compositionally biased stretch (basic and acidic residues) spans 9–42 (SVEKTTKDLKAKEKEVVEEAENGKDKPTNGKAEN). Acidic residues-rich tracts occupy residues 43–81 (EENGEPEVDNEGDEEDEVDEEDEEDEVEGEDDDDDDEVE) and 90–100 (EDDEDDDDDDV). The segment covering 101 to 111 (EIKKQKTDEDD) has biased composition (basic and acidic residues).

Belongs to the pro/parathymosin family.

Its subcellular location is the nucleus. This chain is Prothymosin alpha-A (ptma-a), found in Xenopus laevis (African clawed frog).